The sequence spans 72 residues: Translation initiation factor IF-1 (72 aa).

Positions 1–72 (MAKDDVIQMQ…SRARIVFRTK (72 aa)) constitute an S1-like domain.

The protein belongs to the IF-1 family. Component of the 30S ribosomal translation pre-initiation complex which assembles on the 30S ribosome in the order IF-2 and IF-3, IF-1 and N-formylmethionyl-tRNA(fMet); mRNA recruitment can occur at any time during PIC assembly.

It is found in the cytoplasm. One of the essential components for the initiation of protein synthesis. Stabilizes the binding of IF-2 and IF-3 on the 30S subunit to which N-formylmethionyl-tRNA(fMet) subsequently binds. Helps modulate mRNA selection, yielding the 30S pre-initiation complex (PIC). Upon addition of the 50S ribosomal subunit IF-1, IF-2 and IF-3 are released leaving the mature 70S translation initiation complex. The chain is Translation initiation factor IF-1 from Herminiimonas arsenicoxydans.